The chain runs to 206 residues: Probable thymidylate kinase (206 aa).

10 to 17 (GIDGSGKS) is an ATP binding site.

This sequence belongs to the thymidylate kinase family.

It carries out the reaction dTMP + ATP = dTDP + ADP. In Methanosarcina mazei (strain ATCC BAA-159 / DSM 3647 / Goe1 / Go1 / JCM 11833 / OCM 88) (Methanosarcina frisia), this protein is Probable thymidylate kinase.